Reading from the N-terminus, the 74-residue chain is Large ribosomal subunit protein bL27c (74 aa).

It belongs to the bacterial ribosomal protein bL27 family.

The protein localises to the plastid. The protein resides in the chloroplast. The polypeptide is Large ribosomal subunit protein bL27c (rpl27) (Calyptrosphaera sphaeroidea).